A 101-amino-acid chain; its full sequence is Protein Tat (101 aa).

Positions 1 to 24 are interaction with human CREBBP; the sequence is MEPVDPNLEPWNHPGSQPKTACNN. The segment at 1-48 is transactivation; that stretch reads MEPVDPNLEPWNHPGSQPKTACNNCYCKRCSYHCLVCFQTKGLGISYG. The Zn(2+) site is built by Cys-22, Cys-25, and Cys-27. Residues 22–37 are cysteine-rich; that stretch reads CNNCYCKRCSYHCLVC. Lys-28 bears the N6-acetyllysine; by host PCAF mark. 4 residues coordinate Zn(2+): Cys-30, His-33, Cys-34, and Cys-37. The tract at residues 38-48 is core; sequence FQTKGLGISYG. Residues 47-101 are disordered; the sequence is YGRKKRRQRRSAPPSSEDHQNPIPKQPLPQTRGDQTGSEESKKKVESKTETDPFD. Positions 49-57 match the Nuclear localization signal, RNA-binding (TAR), and protein transduction motif; the sequence is RKKRRQRRS. An interaction with the host capping enzyme RNGTT region spans residues 49-86; sequence RKKRRQRRSAPPSSEDHQNPIPKQPLPQTRGDQTGSEE. Residues Lys-50 and Lys-51 each carry the N6-acetyllysine; by host EP300 and GCN5L2 modification. Arg-52 and Arg-53 each carry asymmetric dimethylarginine; by host PRMT6. Residue Lys-71 forms a Glycyl lysine isopeptide (Lys-Gly) (interchain with G-Cter in ubiquitin) linkage. The Cell attachment site signature appears at 78-80; sequence RGD. Residues 85–101 are compositionally biased toward basic and acidic residues; the sequence is EESKKKVESKTETDPFD.

Belongs to the lentiviruses Tat family. In terms of assembly, interacts with host CCNT1. Associates with the P-TEFb complex composed at least of Tat, P-TEFb (CDK9 and CCNT1), TAR RNA, RNA Pol II. Recruits the HATs CREBBP, TAF1/TFIID, EP300, PCAF and GCN5L2. Interacts with host KAT5/Tip60; this interaction targets the latter to degradation. Interacts with the host deacetylase SIRT1. Interacts with host capping enzyme RNGTT; this interaction stimulates RNGTT. Binds to host KDR, and to the host integrins ITGAV/ITGB3 and ITGA5/ITGB1. Interacts with host KPNB1/importin beta-1 without previous binding to KPNA1/importin alpha-1. Interacts with EIF2AK2. Interacts with host nucleosome assembly protein NAP1L1; this interaction may be required for the transport of Tat within the nucleus, since the two proteins interact at the nuclear rim. Interacts with host C1QBP/SF2P32; this interaction involves lysine-acetylated Tat. Interacts with the host chemokine receptors CCR2, CCR3 and CXCR4. Interacts with host DPP4/CD26; this interaction may trigger an anti-proliferative effect. Interacts with host LDLR. Interacts with the host extracellular matrix metalloproteinase MMP1. Interacts with host PRMT6; this interaction mediates Tat's methylation. Interacts with, and is ubiquitinated by MDM2/Hdm2. Interacts with host PSMC3 and HTATIP2. Interacts with STAB1; this interaction may overcome SATB1-mediated repression of IL2 and IL2RA (interleukin) in T cells by binding to the same domain than HDAC1. Interacts (when acetylated) with human CDK13, thereby increasing HIV-1 mRNA splicing and promoting the production of the doubly spliced HIV-1 protein Nef. Interacts with host TBP; this interaction modulates the activity of transcriptional pre-initiation complex. Interacts with host RELA. Interacts with host PLSCR1; this interaction negatively regulates Tat transactivation activity by altering its subcellular distribution. Post-translationally, asymmetrical arginine methylation by host PRMT6 seems to diminish the transactivation capacity of Tat and affects the interaction with host CCNT1. Acetylation by EP300, CREBBP, GCN5L2/GCN5 and PCAF regulates the transactivation activity of Tat. EP300-mediated acetylation of Lys-50 promotes dissociation of Tat from the TAR RNA through the competitive binding to PCAF's bromodomain. In addition, the non-acetylated Tat's N-terminus can also interact with PCAF. PCAF-mediated acetylation of Lys-28 enhances Tat's binding to CCNT1. Lys-50 is deacetylated by SIRT1. In terms of processing, polyubiquitination by host MDM2 does not target Tat to degradation, but activates its transactivation function and fosters interaction with CCNT1 and TAR RNA. Post-translationally, phosphorylated by EIF2AK2 on serine and threonine residues adjacent to the basic region important for TAR RNA binding and function. Phosphorylation of Tat by EIF2AK2 is dependent on the prior activation of EIF2AK2 by dsRNA.

The protein localises to the host nucleus. It localises to the host nucleolus. It is found in the host cytoplasm. Its subcellular location is the secreted. In terms of biological role, transcriptional activator that increases RNA Pol II processivity, thereby increasing the level of full-length viral transcripts. Recognizes a hairpin structure at the 5'-LTR of the nascent viral mRNAs referred to as the transactivation responsive RNA element (TAR) and recruits the cyclin T1-CDK9 complex (P-TEFb complex) that will in turn hyperphosphorylate the RNA polymerase II to allow efficient elongation. The CDK9 component of P-TEFb and other Tat-activated kinases hyperphosphorylate the C-terminus of RNA Pol II that becomes stabilized and much more processive. Other factors such as HTATSF1/Tat-SF1, SUPT5H/SPT5, and HTATIP2 are also important for Tat's function. Besides its effect on RNA Pol II processivity, Tat induces chromatin remodeling of proviral genes by recruiting the histone acetyltransferases (HATs) CREBBP, EP300 and PCAF to the chromatin. This also contributes to the increase in proviral transcription rate, especially when the provirus integrates in transcriptionally silent region of the host genome. To ensure maximal activation of the LTR, Tat mediates nuclear translocation of NF-kappa-B by interacting with host RELA. Through its interaction with host TBP, Tat may also modulate transcription initiation. Tat can reactivate a latently infected cell by penetrating in it and transactivating its LTR promoter. In the cytoplasm, Tat is thought to act as a translational activator of HIV-1 mRNAs. Its function is as follows. Extracellular circulating Tat can be endocytosed by surrounding uninfected cells via the binding to several surface receptors such as CD26, CXCR4, heparan sulfate proteoglycans (HSPG) or LDLR. Neurons are rarely infected, but they internalize Tat via their LDLR. Through its interaction with nuclear HATs, Tat is potentially able to control the acetylation-dependent cellular gene expression. Modulates the expression of many cellular genes involved in cell survival, proliferation or in coding for cytokines or cytokine receptors. Tat plays a role in T-cell and neurons apoptosis. Tat induced neurotoxicity and apoptosis probably contribute to neuroAIDS. Circulating Tat also acts as a chemokine-like and/or growth factor-like molecule that binds to specific receptors on the surface of the cells, affecting many cellular pathways. In the vascular system, Tat binds to ITGAV/ITGB3 and ITGA5/ITGB1 integrins dimers at the surface of endothelial cells and competes with bFGF for heparin-binding sites, leading to an excess of soluble bFGF. The protein is Protein Tat of Human immunodeficiency virus type 1 group M subtype C (isolate 92BR025) (HIV-1).